The sequence spans 125 residues: Small ribosomal subunit protein eS6 (125 aa).

The segment at 90–109 (KGPGFRPKEKGERRKKTVRG) is disordered.

This sequence belongs to the eukaryotic ribosomal protein eS6 family. Part of the 30S ribosomal subunit.

This Pyrococcus furiosus (strain ATCC 43587 / DSM 3638 / JCM 8422 / Vc1) protein is Small ribosomal subunit protein eS6.